The following is a 346-amino-acid chain: N-acetyl-gamma-glutamyl-phosphate reductase (346 aa).

Residue Cys-154 is part of the active site.

It belongs to the NAGSA dehydrogenase family. Type 1 subfamily.

The protein resides in the cytoplasm. The catalysed reaction is N-acetyl-L-glutamate 5-semialdehyde + phosphate + NADP(+) = N-acetyl-L-glutamyl 5-phosphate + NADPH + H(+). It participates in amino-acid biosynthesis; L-arginine biosynthesis; N(2)-acetyl-L-ornithine from L-glutamate: step 3/4. Functionally, catalyzes the NADPH-dependent reduction of N-acetyl-5-glutamyl phosphate to yield N-acetyl-L-glutamate 5-semialdehyde. This is N-acetyl-gamma-glutamyl-phosphate reductase from Rhodopirellula baltica (strain DSM 10527 / NCIMB 13988 / SH1).